We begin with the raw amino-acid sequence, 352 residues long: MAKRKLNRRQRWRIEKIQAEKRDRANRRTDQQEILVADDLGDEQHGVITAHFGQQVEVESADGPGAENRTTRRCHFRATLEQLVVGDKVIWQPPKSEGLGVVVAIEPRDTVLKRPDMYGNLKPVAANVEQMLVVFAPLPTPSSSLLDRYLVAAELSGIAATLVLNKADLIDDTLRPFVDELSDMYRHLGYPVLEVCAHQREGLTPLHEALAGKTSVFVGQSGVGKSSLINGVLPEADLQVGELSSNSGLGQHTTVTARLVHLPTGGQLIDSPGIREFGLWHIGEDDLLHGYRELSELAGYCKFRNCSHRNEPGCALILAAQNGDIDEERLANFYQISDTLNEDGRERYSTDS.

Positions 109–277 constitute a CP-type G domain; the sequence is DTVLKRPDMY…LIDSPGIREF (169 aa). Residues 165–168 and 219–227 contribute to the GTP site; these read NKAD and GQSGVGKSS. The Zn(2+) site is built by Cys-301, Cys-306, His-308, and Cys-314.

The protein belongs to the TRAFAC class YlqF/YawG GTPase family. RsgA subfamily. In terms of assembly, monomer. Associates with 30S ribosomal subunit, binds 16S rRNA. It depends on Zn(2+) as a cofactor.

The protein localises to the cytoplasm. One of several proteins that assist in the late maturation steps of the functional core of the 30S ribosomal subunit. Helps release RbfA from mature subunits. May play a role in the assembly of ribosomal proteins into the subunit. Circularly permuted GTPase that catalyzes slow GTP hydrolysis, GTPase activity is stimulated by the 30S ribosomal subunit. The sequence is that of Small ribosomal subunit biogenesis GTPase RsgA from Alcanivorax borkumensis (strain ATCC 700651 / DSM 11573 / NCIMB 13689 / SK2).